A 58-amino-acid chain; its full sequence is Large ribosomal subunit protein uL30 (58 aa).

This sequence belongs to the universal ribosomal protein uL30 family. In terms of assembly, part of the 50S ribosomal subunit.

In Pseudomonas savastanoi pv. phaseolicola (strain 1448A / Race 6) (Pseudomonas syringae pv. phaseolicola (strain 1448A / Race 6)), this protein is Large ribosomal subunit protein uL30.